The chain runs to 125 residues: MEYQFTHSIHGIVAKCSMEHEVFARWLNTEIIGHTQNLHNILAEIEKCRAAFPNHYECVFEGQEYSLYFDCDEVIVKVNNLAMAIDEVIVEEGLQLYDQESVAFCGLEDFERFLQAYHKFSSTYH.

This sequence belongs to the UPF0231 family.

The sequence is that of UPF0231 protein HD_1708 from Haemophilus ducreyi (strain 35000HP / ATCC 700724).